A 735-amino-acid polypeptide reads, in one-letter code: MAAGGAVAVAPECRLLPYALHKWSSFSSTYLPENILVDKPNDQSSRWSSESNYPPQYLILKLERPAIVQNITFGKYEKTHVCNLKKFKVFGGMNEENMTELLSSGLKNDYNKETFTLKHKIDEQMFPCRFIKIVPLLSWGPSFNFSIWYVELSGIDDPDIVQPCLNWYSKYREQEAIRLCLKHFRQHNYTEAFESLQKKTKIALEHPMLTDMHDKLVLKGDFDACEELIEKAVNDGLFNQYISQQEYKPRWSQIIPKSTKGDGEDNRPGMRGGHQMVIDVQTETVYLFGGWDGTQDLADFWAYSVKENQWTCISRDTEKENGPSARSCHKMCIDIQRRQIYTLGRYLDSSVRNSKSLKSDFYRYDIDTNTWMLLSEDTAADGGPKLVFDHQMCMDSEKHMIYTFGGRILTCNGSVDDSRASEPQFSGLFAFNCQCQTWKLLREDSCNAGPEDIQSRIGHCMLFHSKNRCLYVFGGQRSKTYLNDFFSYDVDSDHVDIISDGTKKDSGMVPMTGFTQRATIDPELNEIHVLSGLSKDKEKREENVRNSFWIYDIVRNSWSCVYKNDQATKDNLSKSLQEEEPCPRFAHQLVYDELHKVHYLFGGNPGKSCSPKMRLDDFWSLKLCRPSKDYLLRHCKYLIRKHRFEEKAQMDPLSALKYLQNDLYITVDHSDPEETKEFQLLASALFKSGSDFTALGFSDVDHTYAQRTQLFDTLVNFFPDSMTPPKGNLVDLITL.

An N-acetylalanine modification is found at Ala-2. Residues 172–204 enclose the LisH domain; the sequence is REQEAIRLCLKHFRQHNYTEAFESLQKKTKIAL. The 53-residue stretch at 206-258 folds into the CTLH domain; it reads HPMLTDMHDKLVLKGDFDACEELIEKAVNDGLFNQYISQQEYKPRWSQIIPKS. Kelch repeat units follow at residues 284–330, 339–391, 400–458, 469–515, 526–578, and 597–651; these read TVYL…SCHK, QIYT…FDHQ, MIYT…SRIG, CLYV…TGFT, EIHV…SLQE, and VHYL…AQMD. The tract at residues 701–735 is important for location in the cytosol; the sequence is DHTYAQRTQLFDTLVNFFPDSMTPPKGNLVDLITL.

As to quaternary structure, homodimer; may form higher oligomers. Identified in the CTLH complex that contains GID4, RANBP9 and/or RANBP10, MKLN1, MAEA, RMND5A (or alternatively its paralog RMND5B), GID8, ARMC8, WDR26 and YPEL5. Within this complex, MAEA, RMND5A (or alternatively its paralog RMND5B), GID8, WDR26, and RANBP9 and/or RANBP10 form the catalytic core, while GID4, MKLN1, ARMC8 and YPEL5 have ancillary roles. Interacts with RANBP9. Part of a complex consisting of RANBP9, MKLN1 and GID8. Interacts with GABRA1. Interacts with the C-terminal tail of PTGER3. In terms of tissue distribution, detected in brain, especially in hippocampus and cerebellum (at protein level).

The protein localises to the cytoplasm. The protein resides in the cytosol. It localises to the nucleus. Its subcellular location is the nucleoplasm. It is found in the cell projection. The protein localises to the ruffle. The protein resides in the cell cortex. It localises to the synapse. Its subcellular location is the postsynapse. In terms of biological role, component of the CTLH E3 ubiquitin-protein ligase complex that selectively accepts ubiquitin from UBE2H and mediates ubiquitination and subsequent proteasomal degradation of the transcription factor HBP1. Required for internalization of the GABA receptor GABRA1 from the cell membrane via endosomes and subsequent GABRA1 degradation. Acts as a mediator of cell spreading and cytoskeletal responses to the extracellular matrix component THBS1. The sequence is that of Muskelin (Mkln1) from Mus musculus (Mouse).